We begin with the raw amino-acid sequence, 660 residues long: Protein FAM161A (660 aa).

Coiled coils occupy residues 93-120 (EEYF…YQDK) and 296-320 (YHDL…ALLA). A required for interaction with CFAP418 region spans residues 341 to 525 (QLRDFLKYKK…PTVSSRGREQ (185 aa)). Glycyl lysine isopeptide (Lys-Gly) (interchain with G-Cter in SUMO2) cross-links involve residues K468 and K484. A coiled-coil region spans residues 522 to 552 (GREQAVRKSEKERMREYQRELEEREEKLKKR). A disordered region spans residues 605–660 (KSVTEDKESFNEEEKIEERENGEENYFIDTNSQDSYKEKDEANEESEEEKSVEESH). Basic and acidic residues predominate over residues 606 to 623 (SVTEDKESFNEEEKIEER). Residues 645–660 (EANEESEEEKSVEESH) are compositionally biased toward acidic residues.

It belongs to the FAM161 family. As to quaternary structure, interacts (via central region) with CFAP418 (via N-terminus); the interaction is direct. Interacts (via C-terminus) with microtubules. Interacts with LCA5. Interacts with CEP290. Interacts with SDCCAG8. Interacts with FAM161B. Interacts with POC1B. Interacts with CEP78. Forms a microtubule-associated complex with POC5, CETN2 and POC1B. Interacts with CCDC15. As to expression, isoform 1 and isoform 3 are widely expressed with highest levels in retina and testis, with isoform 1 being the most abundant in all tissues tested.

The protein localises to the cytoplasm. It localises to the cytoskeleton. It is found in the cilium basal body. Its subcellular location is the cell projection. The protein resides in the cilium. The protein localises to the microtubule organizing center. It localises to the centrosome. It is found in the centriole. Its function is as follows. Involved in ciliogenesis. In Homo sapiens (Human), this protein is Protein FAM161A (FAM161A).